The following is a 491-amino-acid chain: Glutamyl-tRNA(Gln) amidotransferase subunit A (491 aa).

Active-site charge relay system residues include K79 and S154. Residue S178 is the Acyl-ester intermediate of the active site.

It belongs to the amidase family. GatA subfamily. As to quaternary structure, heterotrimer of A, B and C subunits.

The catalysed reaction is L-glutamyl-tRNA(Gln) + L-glutamine + ATP + H2O = L-glutaminyl-tRNA(Gln) + L-glutamate + ADP + phosphate + H(+). Allows the formation of correctly charged Gln-tRNA(Gln) through the transamidation of misacylated Glu-tRNA(Gln) in organisms which lack glutaminyl-tRNA synthetase. The reaction takes place in the presence of glutamine and ATP through an activated gamma-phospho-Glu-tRNA(Gln). The chain is Glutamyl-tRNA(Gln) amidotransferase subunit A from Natranaerobius thermophilus (strain ATCC BAA-1301 / DSM 18059 / JW/NM-WN-LF).